The sequence spans 235 residues: NAD(P)H-quinone oxidoreductase subunit K, chloroplastic (235 aa).

[4Fe-4S] cluster is bound by residues C43, C44, C108, and C139.

This sequence belongs to the complex I 20 kDa subunit family. As to quaternary structure, NDH is composed of at least 16 different subunits, 5 of which are encoded in the nucleus. [4Fe-4S] cluster is required as a cofactor.

It is found in the plastid. The protein resides in the chloroplast thylakoid membrane. The enzyme catalyses a plastoquinone + NADH + (n+1) H(+)(in) = a plastoquinol + NAD(+) + n H(+)(out). It carries out the reaction a plastoquinone + NADPH + (n+1) H(+)(in) = a plastoquinol + NADP(+) + n H(+)(out). Its function is as follows. NDH shuttles electrons from NAD(P)H:plastoquinone, via FMN and iron-sulfur (Fe-S) centers, to quinones in the photosynthetic chain and possibly in a chloroplast respiratory chain. The immediate electron acceptor for the enzyme in this species is believed to be plastoquinone. Couples the redox reaction to proton translocation, and thus conserves the redox energy in a proton gradient. This Ipomoea purpurea (Common morning glory) protein is NAD(P)H-quinone oxidoreductase subunit K, chloroplastic.